The chain runs to 173 residues: uncharacterized protein (173 aa).

Positions 80 to 107 (HSATVKRTDSSHRLKSHVVDKRPRRSLD) are disordered. The segment covering 85–107 (KRTDSSHRLKSHVVDKRPRRSLD) has biased composition (basic and acidic residues).

This is an uncharacterized protein from Autographa californica nuclear polyhedrosis virus (AcMNPV).